The chain runs to 797 residues: Glycoprotein gp2 (797 aa).

The signal sequence occupies residues 1-25 (MGFIYARKLLLCMAVSIYAIGSTTT). 2 disordered regions span residues 24-188 (TTTE…TTAA) and 212-549 (AATT…EIVP). Low complexity predominate over residues 212–373 (AATTTAATTT…PDSSTGSTST (162 aa)). A compositionally biased stretch (polar residues) spans 374-394 (AEPSSTFTLTPSTATPSTDQF). 2 stretches are compositionally biased toward low complexity: residues 395-430 (TGSS…EAST) and 445-457 (TPDG…NTTP). Residues 466–492 (FADTQQTPDNGVSTQHTTINDHTTANA) are compositionally biased toward polar residues. A compositionally biased stretch (basic residues) spans 495-505 (HAGHHRGRAGG). A glycan (N-linked (GlcNAc...) asparagine; by host) is linked at N590. A helical transmembrane segment spans residues 766–790 (FALVAATTLTVTILCLLCCLYCMLT).

The protein localises to the virion membrane. In terms of biological role, virulence factor. The polypeptide is Glycoprotein gp2 (EUs4) (Equine herpesvirus 1 (strain Ab4p) (EHV-1)).